Here is a 295-residue protein sequence, read N- to C-terminus: Ribosomal RNA small subunit methyltransferase A (295 aa).

The S-adenosyl-L-methionine site is built by Asn33, Val35, Gly60, Glu81, Asp111, and Asn129.

This sequence belongs to the class I-like SAM-binding methyltransferase superfamily. rRNA adenine N(6)-methyltransferase family. RsmA subfamily.

Its subcellular location is the cytoplasm. It carries out the reaction adenosine(1518)/adenosine(1519) in 16S rRNA + 4 S-adenosyl-L-methionine = N(6)-dimethyladenosine(1518)/N(6)-dimethyladenosine(1519) in 16S rRNA + 4 S-adenosyl-L-homocysteine + 4 H(+). In terms of biological role, specifically dimethylates two adjacent adenosines (A1518 and A1519) in the loop of a conserved hairpin near the 3'-end of 16S rRNA in the 30S particle. May play a critical role in biogenesis of 30S subunits. The chain is Ribosomal RNA small subunit methyltransferase A from Streptomyces avermitilis (strain ATCC 31267 / DSM 46492 / JCM 5070 / NBRC 14893 / NCIMB 12804 / NRRL 8165 / MA-4680).